The chain runs to 261 residues: Phosphate import ATP-binding protein PstB (261 aa).

In terms of domain architecture, ABC transporter spans 15–256 (LQVRRLNFYY…PAHQETENYI (242 aa)). 47–54 (GPSGCGKS) provides a ligand contact to ATP.

Belongs to the ABC transporter superfamily. Phosphate importer (TC 3.A.1.7) family. In terms of assembly, the complex is composed of two ATP-binding proteins (PstB), two transmembrane proteins (PstC and PstA) and a solute-binding protein (PstS).

The protein localises to the cell inner membrane. It catalyses the reaction phosphate(out) + ATP + H2O = ADP + 2 phosphate(in) + H(+). Functionally, part of the ABC transporter complex PstSACB involved in phosphate import. Responsible for energy coupling to the transport system. In Burkholderia sp, this protein is Phosphate import ATP-binding protein PstB.